Here is a 351-residue protein sequence, read N- to C-terminus: UDP-N-acetylenolpyruvoylglucosamine reductase (351 aa).

The region spanning 11 to 213 (GVGGSIACFI…KQVRDQVLRI (203 aa)) is the FAD-binding PCMH-type domain. Arginine 158 is an active-site residue. Residue serine 239 is the Proton donor of the active site. Residue glutamate 343 is part of the active site.

Belongs to the MurB family. The cofactor is FAD.

It is found in the cytoplasm. The catalysed reaction is UDP-N-acetyl-alpha-D-muramate + NADP(+) = UDP-N-acetyl-3-O-(1-carboxyvinyl)-alpha-D-glucosamine + NADPH + H(+). It participates in cell wall biogenesis; peptidoglycan biosynthesis. Its function is as follows. Cell wall formation. In Tropheryma whipplei (strain Twist) (Whipple's bacillus), this protein is UDP-N-acetylenolpyruvoylglucosamine reductase.